The chain runs to 388 residues: Dual-specificity RNA methyltransferase RlmN (388 aa).

Glu-109 serves as the catalytic Proton acceptor. One can recognise a Radical SAM core domain in the interval 115-354 (EEDRATLCVS…TIVRKTRGDD (240 aa)). Residues Cys-122 and Cys-359 are joined by a disulfide bond. [4Fe-4S] cluster contacts are provided by Cys-129, Cys-133, and Cys-136. Residues 183 to 184 (GE), Ser-215, 237 to 239 (SLH), and Asn-316 contribute to the S-adenosyl-L-methionine site. The S-methylcysteine intermediate role is filled by Cys-359.

This sequence belongs to the radical SAM superfamily. RlmN family. The cofactor is [4Fe-4S] cluster.

The protein resides in the cytoplasm. It catalyses the reaction adenosine(2503) in 23S rRNA + 2 reduced [2Fe-2S]-[ferredoxin] + 2 S-adenosyl-L-methionine = 2-methyladenosine(2503) in 23S rRNA + 5'-deoxyadenosine + L-methionine + 2 oxidized [2Fe-2S]-[ferredoxin] + S-adenosyl-L-homocysteine. The enzyme catalyses adenosine(37) in tRNA + 2 reduced [2Fe-2S]-[ferredoxin] + 2 S-adenosyl-L-methionine = 2-methyladenosine(37) in tRNA + 5'-deoxyadenosine + L-methionine + 2 oxidized [2Fe-2S]-[ferredoxin] + S-adenosyl-L-homocysteine. Functionally, specifically methylates position 2 of adenine 2503 in 23S rRNA and position 2 of adenine 37 in tRNAs. m2A2503 modification seems to play a crucial role in the proofreading step occurring at the peptidyl transferase center and thus would serve to optimize ribosomal fidelity. The chain is Dual-specificity RNA methyltransferase RlmN from Klebsiella pneumoniae (strain 342).